The primary structure comprises 224 residues: MARYLVLAVALLLAACSSTQKKPLADDPFYAPVYPEAPPTKIAATGSIYQDSQASSLYSDIRAHKVGDIITIVLKESTQAKKSAGNQIKKGSDMSLDPIFAGGSNVSIGGVPIDLRYKDSMNTKRESDADQSNSLDGSISANVMQVLNNGSLVIRGEKWISINNGDEFIRVTGLVRSQDIKPDNTIDSTRMANARIQYSGTGTFADAQKVGWLSQFFMSDWWPF.

The signal sequence occupies residues 1 to 15 (MARYLVLAVALLLAA). The N-palmitoyl cysteine moiety is linked to residue Cys-16. A lipid anchor (S-diacylglycerol cysteine) is attached at Cys-16.

It belongs to the FlgH family. As to quaternary structure, the basal body constitutes a major portion of the flagellar organelle and consists of four rings (L,P,S, and M) mounted on a central rod.

Its subcellular location is the cell outer membrane. The protein resides in the bacterial flagellum basal body. Assembles around the rod to form the L-ring and probably protects the motor/basal body from shearing forces during rotation. The polypeptide is Flagellar L-ring protein (Shewanella baltica (strain OS223)).